A 1088-amino-acid chain; its full sequence is V-type proton ATPase catalytic subunit A (1088 aa).

257-264 contributes to the ATP binding site; sequence GAFGCGKT. The region spanning 485 to 662 is the DOD-type homing endonuclease domain; the sequence is LLGTWAGIGN…LVKIAHSLGI (178 aa).

The protein belongs to the ATPase alpha/beta chains family. As to quaternary structure, V-ATPase is a heteromultimeric enzyme composed of a peripheral catalytic V1 complex (components A to H) attached to an integral membrane V0 proton pore complex (components: a, c, c', c'', d, e, f and VOA1). In terms of processing, this protein undergoes a protein self splicing that involves a post-translational excision of the VDE intervening region (intein) followed by peptide ligation.

It localises to the vacuole membrane. It catalyses the reaction ATP + H2O + 4 H(+)(in) = ADP + phosphate + 5 H(+)(out). Catalytic subunit of the V1 complex of vacuolar(H+)-ATPase (V-ATPase), a multisubunit enzyme composed of a peripheral complex (V1) that hydrolyzes ATP and a membrane integral complex (V0) that translocates protons. V-ATPase is responsible for acidifying and maintaining the pH of intracellular compartments. In terms of biological role, VDE is an endonuclease that can cleave at a site present in a VMA1 allele that lacks the derived endonuclease segment of the open reading frame; cleavage at this site only occurs during meiosis and initiates 'homing', a genetic event that converts a VMA1 allele lacking VDE into one that contains it. The sequence is that of V-type proton ATPase catalytic subunit A (VMA1) from Candida tropicalis (Yeast).